A 500-amino-acid polypeptide reads, in one-letter code: uncharacterized protein (500 aa).

This is an uncharacterized protein from Halorubrum sp. PV6 (HRPV-1).